A 477-amino-acid polypeptide reads, in one-letter code: Tripartite motif-containing protein 72 (477 aa).

Positions 14, 17, 29, 31, 34, 37, 53, 56, 86, 89, 97, 100, 105, 108, 114, and 117 each coordinate Zn(2+). The RING-type zinc-finger motif lies at Cys-16 to Gln-59. The segment at Val-83 to Ala-124 adopts a B box-type zinc-finger fold. Positions Leu-135 to Glu-232 form a coiled coil. In terms of domain architecture, B30.2/SPRY spans Asp-272–Gln-476.

The protein belongs to the TRIM/RBCC family. Homodimer. Homooligomer; disulfide-linked. Oligomerizes on the phospholipid membrane. In terms of processing, disulfide bond formation at Cys-244 occurs in case of membrane damage that cause the entry of the oxidized milieu of the extracellular space, resulting in homooligomerization.

The protein resides in the cell membrane. It localises to the sarcolemma. It is found in the cytoplasmic vesicle membrane. The enzyme catalyses S-ubiquitinyl-[E2 ubiquitin-conjugating enzyme]-L-cysteine + [acceptor protein]-L-lysine = [E2 ubiquitin-conjugating enzyme]-L-cysteine + N(6)-ubiquitinyl-[acceptor protein]-L-lysine.. It participates in protein modification; protein ubiquitination. Its activity is regulated as follows. Specifically binds phosphatidylserine. The binding to phospholipids enhances ubiquitination activity. Its function is as follows. Muscle-specific E3 ubiquitin-protein ligase that plays a central role in cell membrane repair by nucleating the assembly of the repair machinery at injury sites. Acts as a sensor of oxidation: upon membrane damage, entry of extracellular oxidative environment results in disulfide bond formation and homooligomerization at the injury site. This oligomerization acts as a nucleation site for recruitment of TRIM72-containing vesicles to the injury site, leading to membrane patch formation. Probably acts upstream of the Ca(2+)-dependent membrane resealing process. Required for transport of DYSF to sites of cell injury during repair patch formation. Regulates membrane budding and exocytosis. May be involved in the regulation of the mobility of KCNB1-containing endocytic vesicles. This is Tripartite motif-containing protein 72 (trim72) from Xenopus tropicalis (Western clawed frog).